The chain runs to 95 residues: MALKPLGDRIIVRFEETEEKTASGFVLAGASHETTKTAEVLAVGEGTRTLTGELIAPSVAVGDKVLVENGTGISVKDGEDYVSIIREADILAVLA.

It belongs to the GroES chaperonin family. Heptamer of 7 subunits arranged in a ring. Interacts with the chaperonin GroEL.

It localises to the cytoplasm. Together with the chaperonin GroEL, plays an essential role in assisting protein folding. The GroEL-GroES system forms a nano-cage that allows encapsulation of the non-native substrate proteins and provides a physical environment optimized to promote and accelerate protein folding. GroES binds to the apical surface of the GroEL ring, thereby capping the opening of the GroEL channel. In Streptococcus thermophilus (strain ATCC BAA-491 / LMD-9), this protein is Co-chaperonin GroES.